A 340-amino-acid chain; its full sequence is Guanine nucleotide-binding protein G(I)/G(S)/G(T) subunit beta-2 (340 aa).

The residue at position 2 (Ser2) is an N-acetylserine. WD repeat units lie at residues 53-83 (GHLAKIYAMHWGTDSRLLVSASQDGKLIIWD), 95-125 (LRSSWVMTCAYAPSGNFVACGGLDNICSIYS), 141-170 (GHTGYLSCCRFLDDNQIITSSGDTTCALWD), 182-212 (GHSGDVMSLSLAPDGRTFVSGACDASIKLWD), 224-254 (GHESDINAVAFFPNGYAFTTGSDDATCRLFD), 268-298 (NIICGITSVAFSRSGRLLLAGYDDFNCNIWD), and 310-340 (GHDNRVSCLGVTDDGMAVATGSWDSFLKIWN). Tyr239 carries the post-translational modification Phosphotyrosine.

It belongs to the WD repeat G protein beta family. As to quaternary structure, g proteins are composed of 3 units, alpha, beta and gamma. In this context, interacts with GNAI2 and GNG2. Interacts with ARHGEF18 and RASD2. Interacts with ATXN10. Interacts with SCN8A. In terms of tissue distribution, expressed in all cardiac subcompartments and in the brain, with highest levels in the atrioventricular node and brain.

It is found in the cytoplasm. The protein localises to the perinuclear region. The protein resides in the cell membrane. Functionally, guanine nucleotide-binding proteins (G proteins) are involved as a modulator or transducer in various transmembrane signaling systems. The beta and gamma chains are required for the GTPase activity, for replacement of GDP by GTP, and for G protein-effector interaction. This Homo sapiens (Human) protein is Guanine nucleotide-binding protein G(I)/G(S)/G(T) subunit beta-2 (GNB2).